The primary structure comprises 172 residues: Protein-export protein SecB (172 aa).

This sequence belongs to the SecB family. As to quaternary structure, homotetramer, a dimer of dimers. One homotetramer interacts with 1 SecA dimer.

It is found in the cytoplasm. Functionally, one of the proteins required for the normal export of preproteins out of the cell cytoplasm. It is a molecular chaperone that binds to a subset of precursor proteins, maintaining them in a translocation-competent state. It also specifically binds to its receptor SecA. The polypeptide is Protein-export protein SecB (Stenotrophomonas maltophilia (strain K279a)).